We begin with the raw amino-acid sequence, 513 residues long: ATP synthase subunit alpha (513 aa).

169-176 (GDRQTGKT) contributes to the ATP binding site.

The protein belongs to the ATPase alpha/beta chains family. As to quaternary structure, F-type ATPases have 2 components, CF(1) - the catalytic core - and CF(0) - the membrane proton channel. CF(1) has five subunits: alpha(3), beta(3), gamma(1), delta(1), epsilon(1). CF(0) has three main subunits: a(1), b(2) and c(9-12). The alpha and beta chains form an alternating ring which encloses part of the gamma chain. CF(1) is attached to CF(0) by a central stalk formed by the gamma and epsilon chains, while a peripheral stalk is formed by the delta and b chains.

The protein resides in the cell inner membrane. It catalyses the reaction ATP + H2O + 4 H(+)(in) = ADP + phosphate + 5 H(+)(out). Its function is as follows. Produces ATP from ADP in the presence of a proton gradient across the membrane. The alpha chain is a regulatory subunit. The protein is ATP synthase subunit alpha of Shigella boydii serotype 18 (strain CDC 3083-94 / BS512).